The following is a 193-amino-acid chain: ATP-dependent Clp protease proteolytic subunit (193 aa).

S98 functions as the Nucleophile in the catalytic mechanism. H123 is a catalytic residue.

Belongs to the peptidase S14 family. Fourteen ClpP subunits assemble into 2 heptameric rings which stack back to back to give a disk-like structure with a central cavity, resembling the structure of eukaryotic proteasomes.

The protein localises to the cytoplasm. The catalysed reaction is Hydrolysis of proteins to small peptides in the presence of ATP and magnesium. alpha-casein is the usual test substrate. In the absence of ATP, only oligopeptides shorter than five residues are hydrolyzed (such as succinyl-Leu-Tyr-|-NHMec, and Leu-Tyr-Leu-|-Tyr-Trp, in which cleavage of the -Tyr-|-Leu- and -Tyr-|-Trp bonds also occurs).. Its function is as follows. Cleaves peptides in various proteins in a process that requires ATP hydrolysis. Has a chymotrypsin-like activity. Plays a major role in the degradation of misfolded proteins. The protein is ATP-dependent Clp protease proteolytic subunit of Agathobacter rectalis (strain ATCC 33656 / DSM 3377 / JCM 17463 / KCTC 5835 / VPI 0990) (Eubacterium rectale).